A 537-amino-acid polypeptide reads, in one-letter code: ATP synthase subunit alpha (537 aa).

Position 171-178 (171-178 (GDRQTGKT)) interacts with ATP.

Belongs to the ATPase alpha/beta chains family. F-type ATPases have 2 components, CF(1) - the catalytic core - and CF(0) - the membrane proton channel. CF(1) has five subunits: alpha(3), beta(3), gamma(1), delta(1), epsilon(1). CF(0) has four main subunits: a, b, b' and c.

It is found in the cell inner membrane. The enzyme catalyses ATP + H2O + 4 H(+)(in) = ADP + phosphate + 5 H(+)(out). Its function is as follows. Produces ATP from ADP in the presence of a proton gradient across the membrane. The alpha chain is a regulatory subunit. The polypeptide is ATP synthase subunit alpha (Chloroherpeton thalassium (strain ATCC 35110 / GB-78)).